Consider the following 28-residue polypeptide: M-poneritoxin-Dq4a (28 aa).

At alanine 28 the chain carries Alanine amide.

As to expression, expressed by the venom gland.

It is found in the secreted. The synthetic peptide has weak antimicrobial activity against Gram-negative bacterium E.coli ATCC 10536. It does not show antimicrobial activity against the Gram-positive bacteria B.amyloliquefacies S499, L.monocytogenes 2231 and S.aureus ATCC 29213, against the Gram-negative bacteria P.putida BTP1 and P.aeruginosa PaO1, or against the fungi S.cerevisiae, R.mucilaginosa, C.cucumerinum, F.oxysporum and B.cinerea. The polypeptide is M-poneritoxin-Dq4a (Dinoponera quadriceps (South American ant)).